A 219-amino-acid polypeptide reads, in one-letter code: NAD(P)H-quinone oxidoreductase subunit K 2 (219 aa).

The [4Fe-4S] cluster site is built by Cys-53, Cys-54, Cys-118, and Cys-149.

It belongs to the complex I 20 kDa subunit family. As to quaternary structure, NDH-1 can be composed of about 15 different subunits; different subcomplexes with different compositions have been identified which probably have different functions. [4Fe-4S] cluster serves as cofactor.

Its subcellular location is the cellular thylakoid membrane. It catalyses the reaction a plastoquinone + NADH + (n+1) H(+)(in) = a plastoquinol + NAD(+) + n H(+)(out). The enzyme catalyses a plastoquinone + NADPH + (n+1) H(+)(in) = a plastoquinol + NADP(+) + n H(+)(out). Its function is as follows. NDH-1 shuttles electrons from an unknown electron donor, via FMN and iron-sulfur (Fe-S) centers, to quinones in the respiratory and/or the photosynthetic chain. The immediate electron acceptor for the enzyme in this species is believed to be plastoquinone. Couples the redox reaction to proton translocation, and thus conserves the redox energy in a proton gradient. Cyanobacterial NDH-1 also plays a role in inorganic carbon-concentration. The sequence is that of NAD(P)H-quinone oxidoreductase subunit K 2 from Synechocystis sp. (strain ATCC 27184 / PCC 6803 / Kazusa).